The chain runs to 286 residues: Shikimate dehydrogenase (NADP(+)) (286 aa).

Residues 22 to 24 and Thr-71 each bind shikimate; that span reads SRS. Catalysis depends on Lys-75, which acts as the Proton acceptor. An NADP(+)-binding site is contributed by Glu-87. Shikimate is bound by residues Asn-96 and Asp-111. NADP(+) is bound by residues 136-140, 160-165, and Ile-225; these read GAGGA and NRTPER. Tyr-227 is a binding site for shikimate. Gly-248 provides a ligand contact to NADP(+).

It belongs to the shikimate dehydrogenase family. Homodimer.

The catalysed reaction is shikimate + NADP(+) = 3-dehydroshikimate + NADPH + H(+). Its pathway is metabolic intermediate biosynthesis; chorismate biosynthesis; chorismate from D-erythrose 4-phosphate and phosphoenolpyruvate: step 4/7. Its function is as follows. Involved in the biosynthesis of the chorismate, which leads to the biosynthesis of aromatic amino acids. Catalyzes the reversible NADPH linked reduction of 3-dehydroshikimate (DHSA) to yield shikimate (SA). The polypeptide is Shikimate dehydrogenase (NADP(+)) (Sinorhizobium medicae (strain WSM419) (Ensifer medicae)).